We begin with the raw amino-acid sequence, 298 residues long: tRNA pseudouridine synthase B (298 aa).

Asp-39 serves as the catalytic Nucleophile.

This sequence belongs to the pseudouridine synthase TruB family. Type 1 subfamily.

The enzyme catalyses uridine(55) in tRNA = pseudouridine(55) in tRNA. In terms of biological role, responsible for synthesis of pseudouridine from uracil-55 in the psi GC loop of transfer RNAs. In Oenococcus oeni (strain ATCC BAA-331 / PSU-1), this protein is tRNA pseudouridine synthase B.